The sequence spans 532 residues: L-proline--[L-prolyl-carrier protein] ligase (532 aa).

Residues 510 to 532 (KTDYRRLGLDAPPRPAAPLGTAR) form a disordered region.

This sequence belongs to the ATP-dependent AMP-binding enzyme family.

The enzyme catalyses holo-[peptidyl-carrier protein] + L-proline + ATP = L-prolyl-[peptidyl-carrier protein] + AMP + diphosphate. Its function is as follows. Involved in the biosynthesis of undecylprodigiosin. Catalyzes the conversion of L-proline to L-prolyl-AMP and the transfer of the L-prolyl group to acyl carrier protein RedO. This chain is L-proline--[L-prolyl-carrier protein] ligase, found in Streptomyces coelicolor (strain ATCC BAA-471 / A3(2) / M145).